The primary structure comprises 499 residues: Probable cytosol aminopeptidase (499 aa).

Mn(2+) is bound by residues Lys-267 and Asp-272. The active site involves Lys-279. Mn(2+) is bound by residues Asp-290, Asp-349, and Glu-351. Arg-353 is a catalytic residue.

The protein belongs to the peptidase M17 family. Mn(2+) serves as cofactor.

The protein localises to the cytoplasm. It carries out the reaction Release of an N-terminal amino acid, Xaa-|-Yaa-, in which Xaa is preferably Leu, but may be other amino acids including Pro although not Arg or Lys, and Yaa may be Pro. Amino acid amides and methyl esters are also readily hydrolyzed, but rates on arylamides are exceedingly low.. The enzyme catalyses Release of an N-terminal amino acid, preferentially leucine, but not glutamic or aspartic acids.. Its function is as follows. Presumably involved in the processing and regular turnover of intracellular proteins. Catalyzes the removal of unsubstituted N-terminal amino acids from various peptides. The polypeptide is Probable cytosol aminopeptidase (Buchnera aphidicola subsp. Acyrthosiphon pisum (strain 5A)).